We begin with the raw amino-acid sequence, 339 residues long: MTASQQQIQLARRPQGIPVHEDFRFETIPVPEPKQGEVLVKTLYVSVDPYMRGRMQDTKSYVEPFALDKALSGGVIAEVVSDGNHLKKGDIVIGNLSWQEFSAVSESALRKIDTSLAPASAYLGILGMTGLTAYFGLLDIGRPKEGETVVVSGAAGAVGSTVGQIAKIKGARVVGIAGSDEKIDYLKQELQFDEAINYKTADDIQKALQNACPDGVDVYFDNVGGPISDAVMNLLNEFARIPVCGAISSYNAESEADDMGPRVQSKLIKTKSLMQGFIVSDYSDRFSEGAKQLAEWLKAGKLHYEETITEGFENIPDAFLGLFKGENKGKQLIKVSDPS.

NADP(+) is bound by residues 156 to 159 (GAVG), lysine 182, tyrosine 198, asparagine 222, 244 to 250 (CGAISSY), 277 to 279 (FIV), and asparagine 327.

It belongs to the NADP-dependent oxidoreductase L4BD family.

In terms of biological role, putative quinone oxidoreductase that may contribute to the degradation of aromatic compounds. This is Putative NADP-dependent oxidoreductase YfmJ (yfmJ) from Bacillus subtilis (strain 168).